The chain runs to 172 residues: Translation initiation factor IF-3 (172 aa).

This sequence belongs to the IF-3 family. Monomer.

The protein resides in the cytoplasm. In terms of biological role, IF-3 binds to the 30S ribosomal subunit and shifts the equilibrium between 70S ribosomes and their 50S and 30S subunits in favor of the free subunits, thus enhancing the availability of 30S subunits on which protein synthesis initiation begins. The polypeptide is Translation initiation factor IF-3 (Campylobacter fetus subsp. fetus (strain 82-40)).